A 566-amino-acid polypeptide reads, in one-letter code: Putative lipase ATG15 (566 aa).

The Cytoplasmic segment spans residues 1–17; that stretch reads MGSKHKKNASKSLRAFS. A helical; Signal-anchor for type II membrane protein membrane pass occupies residues 18–38; sequence FIILSASIALVYIFNPVKLIF. Residues 39–566 are Lumenal-facing; that stretch reads PSSIIRFHHG…CVEWGDEEDA (528 aa). Residues Asn-264 and Asn-348 are each glycosylated (N-linked (GlcNAc...) asparagine). Ser-366 acts as the Charge relay system in catalysis. N-linked (GlcNAc...) asparagine glycosylation is present at Asn-483. The tract at residues 507-545 is disordered; the sequence is DSLDDEPPLPNPLRPGKPSTTSSSQHHTSTTTTTETSRP. A compositionally biased stretch (low complexity) spans 522 to 543; sequence GKPSTTSSSQHHTSTTTTTETS.

The protein belongs to the AB hydrolase superfamily. Lipase family. Binds to both phosphatidylinositol (PI) and phosphatidylinositol 3,5-bisphosphate (PIP2).

The protein resides in the endosome. It is found in the multivesicular body membrane. The protein localises to the prevacuolar compartment membrane. It catalyses the reaction a triacylglycerol + H2O = a diacylglycerol + a fatty acid + H(+). Its function is as follows. Lipase which is essential for lysis of subvacuolar cytoplasm to vacuole targeted bodies and intravacuolar autophagic bodies. Involved in the lysis of intravacuolar multivesicular body (MVB) vesicles. The intravacuolar membrane disintegration by ATG15 is critical to life span extension. In Meyerozyma guilliermondii (strain ATCC 6260 / CBS 566 / DSM 6381 / JCM 1539 / NBRC 10279 / NRRL Y-324) (Yeast), this protein is Putative lipase ATG15 (ATG15).